A 231-amino-acid polypeptide reads, in one-letter code: Probable septum site-determining protein MinC (231 aa).

Belongs to the MinC family. In terms of assembly, interacts with MinD and FtsZ.

Cell division inhibitor that blocks the formation of polar Z ring septums. Rapidly oscillates between the poles of the cell to destabilize FtsZ filaments that have formed before they mature into polar Z rings. Prevents FtsZ polymerization. This Baumannia cicadellinicola subsp. Homalodisca coagulata protein is Probable septum site-determining protein MinC.